Reading from the N-terminus, the 57-residue chain is uncharacterized protein (57 aa).

A coiled-coil region spans residues 9-45 (NWQEEIRKIIIERVRREAKKRLLEETRKLRMEMKSSK).

This is an uncharacterized protein from Archaeoglobus fulgidus (strain ATCC 49558 / DSM 4304 / JCM 9628 / NBRC 100126 / VC-16).